The following is a 483-amino-acid chain: Proline--tRNA ligase (483 aa).

Belongs to the class-II aminoacyl-tRNA synthetase family. ProS type 3 subfamily. In terms of assembly, homodimer.

It localises to the cytoplasm. It carries out the reaction tRNA(Pro) + L-proline + ATP = L-prolyl-tRNA(Pro) + AMP + diphosphate. Its function is as follows. Catalyzes the attachment of proline to tRNA(Pro) in a two-step reaction: proline is first activated by ATP to form Pro-AMP and then transferred to the acceptor end of tRNA(Pro). The sequence is that of Proline--tRNA ligase from Natranaerobius thermophilus (strain ATCC BAA-1301 / DSM 18059 / JW/NM-WN-LF).